The chain runs to 156 residues: Small ribosomal subunit protein uS7 (156 aa).

This sequence belongs to the universal ribosomal protein uS7 family. As to quaternary structure, part of the 30S ribosomal subunit. Contacts proteins S9 and S11.

Its function is as follows. One of the primary rRNA binding proteins, it binds directly to 16S rRNA where it nucleates assembly of the head domain of the 30S subunit. Is located at the subunit interface close to the decoding center, probably blocks exit of the E-site tRNA. The sequence is that of Small ribosomal subunit protein uS7 from Streptococcus agalactiae serotype Ia (strain ATCC 27591 / A909 / CDC SS700).